The primary structure comprises 447 residues: Phosphoglucosamine mutase (447 aa).

Catalysis depends on serine 107, which acts as the Phosphoserine intermediate. Mg(2+)-binding residues include serine 107, aspartate 246, aspartate 248, and aspartate 250. At serine 107 the chain carries Phosphoserine.

Belongs to the phosphohexose mutase family. Requires Mg(2+) as cofactor. Post-translationally, activated by phosphorylation.

It catalyses the reaction alpha-D-glucosamine 1-phosphate = D-glucosamine 6-phosphate. Catalyzes the conversion of glucosamine-6-phosphate to glucosamine-1-phosphate. This chain is Phosphoglucosamine mutase, found in Ralstonia nicotianae (strain ATCC BAA-1114 / GMI1000) (Ralstonia solanacearum).